The chain runs to 559 residues: MRLHRLRARLSAVACGLLLLLVRGQGQDSASPIRTTHTGQVLGSLVHVKGANAGVQTFLGIPFAKPPLGPLRFAPPEPPESWSGVRDGTTHPAMCLQDLTAVESEFLSQFNMTFPSDSMSEDCLYLSIYTPAHSHEGSNLPVMVWIHGGALVFGMASLYDGSMLAALENVVVVIIQYRLGVLGFFSTGDKHATGNWGYLDQVAALRWVQQNIAHFGGNPDRVTIFGESAGGTSVSSLVVSPISQGLFHGAIMESGVALLPGLIASSADVISTVVANLSACDQVDSEALVGCLRGKSKEEILAINKPFKMIPGVVDGVFLPRHPQELLASADFQPVPSIVGVNNNEFGWLIPKVMRIYDTQKEMDREASQAALQKMLTLLMLPPTFGDLLREEYIGDNGDPQTLQAQFQEMMADSMFVIPALQVAHFQCSRAPVYFYEFQHQPSWLKNIRPPHMKADHGDELPFVFRSFFGGNYIKFTEEEEQLSRKMMKYWANFARNGNPNGEGLPHWPLFDQEEQYLQLNLQPAVGRALKAHRLQFWKKALPQKIQELEEPEERHTEL.

An N-terminal signal peptide occupies residues 1–26 (MRLHRLRARLSAVACGLLLLLVRGQG). Q27 carries the post-translational modification Pyrrolidone carboxylic acid. Residues C95 and C123 are joined by a disulfide bond. A glycan (N-linked (GlcNAc...) asparagine) is linked at N111. S228 acts as the Acyl-ester intermediate in catalysis. N-linked (GlcNAc...) asparagine glycosylation occurs at N276. Residues C280 and C291 are joined by a disulfide bond. Residues E345 and H457 each act as charge relay system in the active site. The Prevents secretion from ER signature appears at 556 to 559 (HTEL).

This sequence belongs to the type-B carboxylesterase/lipase family. As to quaternary structure, monomer. Glycosylated. As to expression, preferentially expressed in intestine with moderate expression in liver. Within the intestine, highest expression is found in small intestine with lower expression in colon and rectum.

The protein localises to the endoplasmic reticulum lumen. It catalyses the reaction cocaine + H2O = ecgonine methyl ester + benzoate + H(+). It carries out the reaction a carboxylic ester + H2O = an alcohol + a carboxylate + H(+). The catalysed reaction is 4-methylumbelliferyl acetate + H2O = 4-methylumbelliferone + acetate + H(+). The enzyme catalyses 2-(5Z,8Z,11Z,14Z-eicosatetraenoyl)-glycerol + H2O = glycerol + (5Z,8Z,11Z,14Z)-eicosatetraenoate + H(+). It catalyses the reaction prostaglandin E2 1-glyceryl ester + H2O = prostaglandin E2 + glycerol + H(+). It carries out the reaction prostaglandin F2alpha 1-glyceryl ester + H2O = prostaglandin F2alpha + glycerol + H(+). Involved in the detoxification of xenobiotics and in the activation of ester and amide prodrugs. Shows high catalytic efficiency for hydrolysis of cocaine, 4-methylumbelliferyl acetate, heroin and 6-monoacetylmorphine. Hydrolyzes aspirin, substrates with large alcohol group and small acyl group and endogenous lipids such as triacylglycerol. Converts monoacylglycerides to free fatty acids and glycerol. Hydrolyzes of 2-arachidonoylglycerol and prostaglandins. In Homo sapiens (Human), this protein is Cocaine esterase.